Consider the following 209-residue polypeptide: Large ribosomal subunit protein bL25 (209 aa).

The segment at 185–209 (SKATTGEEEGAEAAGEGEEAEEKPE) is disordered. Residues 190 to 209 (GEEEGAEAAGEGEEAEEKPE) show a composition bias toward acidic residues.

The protein belongs to the bacterial ribosomal protein bL25 family. CTC subfamily. In terms of assembly, part of the 50S ribosomal subunit; part of the 5S rRNA/L5/L18/L25 subcomplex. Contacts the 5S rRNA. Binds to the 5S rRNA independently of L5 and L18.

In terms of biological role, this is one of the proteins that binds to the 5S RNA in the ribosome where it forms part of the central protuberance. In Syntrophomonas wolfei subsp. wolfei (strain DSM 2245B / Goettingen), this protein is Large ribosomal subunit protein bL25.